The primary structure comprises 394 residues: Elongation factor Tu (394 aa).

One can recognise a tr-type G domain in the interval 10 to 204 (KPHINVGTIG…ALDNYIPEPK (195 aa)). The tract at residues 19–26 (GHVDHGKT) is G1. 19–26 (GHVDHGKT) lines the GTP pocket. Thr26 contributes to the Mg(2+) binding site. Positions 60–64 (GITIN) are G2. The segment at 81–84 (DCPG) is G3. GTP-binding positions include 81–85 (DCPGH) and 136–139 (NKCD). Residues 136–139 (NKCD) are G4. The tract at residues 174 to 176 (SAL) is G5.

Belongs to the TRAFAC class translation factor GTPase superfamily. Classic translation factor GTPase family. EF-Tu/EF-1A subfamily. Monomer.

Its subcellular location is the cytoplasm. The enzyme catalyses GTP + H2O = GDP + phosphate + H(+). Functionally, GTP hydrolase that promotes the GTP-dependent binding of aminoacyl-tRNA to the A-site of ribosomes during protein biosynthesis. The chain is Elongation factor Tu from Blochmanniella pennsylvanica (strain BPEN).